The sequence spans 163 residues: MASKMSLRYSLFLIFFSLISLQGFAKKTGDVSELQIGVKFKPKTCEVQAHKGDTIKVHYRGKLTDGTVFDSSFERGDPFEFKLGSGQVIKGWDQGLLGACVGEKRKLKIPAKLGYGEQGSPPTIPGGATLIFDTELIAVNEKPAGGEEYGGDEDDEGYGNDEL.

An N-terminal signal peptide occupies residues 1–25 (MASKMSLRYSLFLIFFSLISLQGFA). Residues 52 to 140 (GDTIKVHYRG…IFDTELIAVN (89 aa)) enclose the PPIase FKBP-type domain. The interval 142–163 (KPAGGEEYGGDEDDEGYGNDEL) is disordered. Over residues 149–163 (YGGDEDDEGYGNDEL) the composition is skewed to acidic residues. A Prevents secretion from ER motif is present at residues 160-163 (NDEL).

It belongs to the FKBP-type PPIase family.

The protein resides in the endoplasmic reticulum lumen. It catalyses the reaction [protein]-peptidylproline (omega=180) = [protein]-peptidylproline (omega=0). PPIases accelerate the folding of proteins. It catalyzes the cis-trans isomerization of proline imidic peptide bonds in oligopeptides. This Arabidopsis thaliana (Mouse-ear cress) protein is Peptidyl-prolyl cis-trans isomerase FKBP15-2 (FKBP15-2).